The chain runs to 477 residues: PTS system glucose-specific EIICB component (477 aa).

The Cytoplasmic portion of the chain corresponds to 1–14; sequence MFKNAFANLQKVGK. One can recognise a PTS EIIC type-1 domain in the interval 1–388; sequence MFKNAFANLQ…LDLKTPGRED (388 aa). The chain crosses the membrane as a helical span at residues 15 to 35; it reads SLMLPVSVLPIAGILLGVGSA. Over 36-50 the chain is Periplasmic; sequence NFSWLPAVVSHVMAE. The chain crosses the membrane as a helical span at residues 51-71; sequence AGGSVFANMPLIFAIGVALGF. The Cytoplasmic portion of the chain corresponds to 72–79; the sequence is TNNDGVSA. A helical transmembrane segment spans residues 80 to 100; sequence LAAVVAYGIMVKTMAVVAPLV. Topologically, residues 101–111 are periplasmic; it reads LHLPAEEIASK. A helical membrane pass occupies residues 112–132; it reads HLADTGVLGGIISGAIAAYMF. Residues 133–151 are Cytoplasmic-facing; the sequence is NRFYRIKLPEYLGFFAGKR. The helical transmembrane segment at 152–172 threads the bilayer; the sequence is FVPIISGLAAIFTGVVLSFIW. Residues 173 to 190 are Periplasmic-facing; the sequence is PPIGSAIQTFSQWAAYQN. A helical transmembrane segment spans residues 191-211; it reads PVVAFGIYGFIERCLVPFGLH. The Cytoplasmic portion of the chain corresponds to 212 to 249; the sequence is HIWNVPFQMQIGEYTNAAGQVFHGDIPRYMAGDPTAGK. A helical membrane pass occupies residues 250 to 270; sequence LSGGFLFKMYGLPAAAIAIWH. Topologically, residues 271–279 are periplasmic; it reads SAKPENRAK. A helical membrane pass occupies residues 280-300; it reads VGGIMISAALTSFLTGITEPI. Topologically, residues 301 to 309 are cytoplasmic; it reads EFSFMFVAP. A helical membrane pass occupies residues 310 to 330; that stretch reads ILYIIHAILAGLAFPICILLG. Residues 331–355 lie on the Periplasmic side of the membrane; it reads MRDGTSFSHGLIDFIVLSGNSSKLW. A helical transmembrane segment spans residues 356–376; the sequence is LFPIVGIGYAIVYYTIFRVLI. The Cytoplasmic segment spans residues 377–477; it reads KALDLKTPGR…TEMDEYIRNH (101 aa). The region spanning 399–477 is the PTS EIIB type-1 domain; the sequence is SEMAPALVAA…TEMDEYIRNH (79 aa). The active-site Phosphocysteinsyse intermediate; for EIIB activity is cysteine 421. Cysteine 421 carries the phosphocysteine modification.

It localises to the cell inner membrane. It catalyses the reaction N(pros)-phospho-L-histidyl-[protein] + D-glucose(out) = D-glucose 6-phosphate(in) + L-histidyl-[protein]. In terms of biological role, the phosphoenolpyruvate-dependent sugar phosphotransferase system (sugar PTS), a major carbohydrate active transport system, catalyzes the phosphorylation of incoming sugar substrates concomitantly with their translocation across the cell membrane. The enzyme II complex composed of PtsG and Crr is involved in glucose transport. Also functions as a chemoreceptor monitoring the environment for changes in sugar concentration. The protein is PTS system glucose-specific EIICB component (ptsG) of Escherichia coli O6:H1 (strain CFT073 / ATCC 700928 / UPEC).